Consider the following 117-residue polypeptide: Nascent polypeptide-associated complex protein (117 aa).

Residues 9-77 (PKQLKQMQRA…ARERSLEAEM (69 aa)) form the NAC-A/B domain.

It belongs to the NAC-alpha family. As to quaternary structure, homodimer. Interacts with the ribosome. Binds ribosomal RNA.

Contacts the emerging nascent chain on the ribosome. The protein is Nascent polypeptide-associated complex protein of Methanothermobacter thermautotrophicus (strain ATCC 29096 / DSM 1053 / JCM 10044 / NBRC 100330 / Delta H) (Methanobacterium thermoautotrophicum).